Reading from the N-terminus, the 316-residue chain is uncharacterized protein (316 aa).

Residues 1-56 (MATLSDVAKKANVSKMTVSRVINHPETVTDELKKLVHSAMKELNYIPNYAARALVQ) form the HTH lacI-type domain. The H-T-H motif DNA-binding region spans 4–23 (LSDVAKKANVSKMTVSRVIN).

This is an uncharacterized protein from Bacillus subtilis (strain 168).